A 100-amino-acid polypeptide reads, in one-letter code: Signal recognition particle 19 kDa protein (100 aa).

The protein belongs to the SRP19 family. As to quaternary structure, part of the signal recognition particle protein translocation system, which is composed of SRP and FtsY. Archaeal SRP consists of a 7S RNA molecule of 300 nucleotides and two protein subunits: SRP54 and SRP19.

Its subcellular location is the cytoplasm. Involved in targeting and insertion of nascent membrane proteins into the cytoplasmic membrane. Binds directly to 7S RNA and mediates binding of the 54 kDa subunit of the SRP. The protein is Signal recognition particle 19 kDa protein of Caldivirga maquilingensis (strain ATCC 700844 / DSM 13496 / JCM 10307 / IC-167).